The sequence spans 200 residues: Recombination protein RecR (200 aa).

A C4-type zinc finger spans residues 57–72 (CRQCRTLTEEELCPQC). The Toprim domain maps to 80–175 (TLLCVVEGPM…ITSRIAHGVP (96 aa)).

It belongs to the RecR family.

May play a role in DNA repair. It seems to be involved in an RecBC-independent recombinational process of DNA repair. It may act with RecF and RecO. This is Recombination protein RecR from Pseudomonas fluorescens (strain SBW25).